Consider the following 136-residue polypeptide: Histone H3, embryonic (136 aa).

Residues 1–43 are disordered; sequence MARTKQTARKSTGGKAPRKQLATKAARKSAPATGGVKKPHRYR. At Lys5 the chain carries N6-methylated lysine. Position 10 is an N6-acetyllysine; alternate (Lys10). Lys10 carries the post-translational modification N6-methylated lysine; alternate. Residue Ser11 is modified to Phosphoserine. N6-acetyllysine is present on residues Lys15 and Lys24. 3 positions are modified to N6-methylated lysine: Lys28, Lys37, and Lys80.

This sequence belongs to the histone H3 family. In terms of assembly, the nucleosome is a histone octamer containing two molecules each of H2A, H2B, H3 and H4 assembled in one H3-H4 heterotetramer and two H2A-H2B heterodimers. The octamer wraps approximately 147 bp of DNA. Acetylation is generally linked to gene activation. Post-translationally, methylation at Lys-5 is linked to gene activation. Methylation at Lys-10 is linked to gene repression.

The protein localises to the nucleus. Its subcellular location is the chromosome. Functionally, core component of nucleosome. Nucleosomes wrap and compact DNA into chromatin, limiting DNA accessibility to the cellular machineries which require DNA as a template. Histones thereby play a central role in transcription regulation, DNA repair, DNA replication and chromosomal stability. DNA accessibility is regulated via a complex set of post-translational modifications of histones, also called histone code, and nucleosome remodeling. The protein is Histone H3, embryonic of Strongylocentrotus purpuratus (Purple sea urchin).